We begin with the raw amino-acid sequence, 347 residues long: Probable dual-specificity RNA methyltransferase RlmN (347 aa).

E90 serves as the catalytic Proton acceptor. The region spanning 96 to 326 is the Radical SAM core domain; it reads YKHGNSICIS…VTVRREMGSD (231 aa). Residues C103 and C331 are joined by a disulfide bond. C110, C114, and C117 together coordinate [4Fe-4S] cluster. Residues 157 to 158, S189, 212 to 214, and N288 contribute to the S-adenosyl-L-methionine site; these read GE and SLH. C331 acts as the S-methylcysteine intermediate in catalysis.

It belongs to the radical SAM superfamily. RlmN family. [4Fe-4S] cluster serves as cofactor.

It is found in the cytoplasm. The catalysed reaction is adenosine(2503) in 23S rRNA + 2 reduced [2Fe-2S]-[ferredoxin] + 2 S-adenosyl-L-methionine = 2-methyladenosine(2503) in 23S rRNA + 5'-deoxyadenosine + L-methionine + 2 oxidized [2Fe-2S]-[ferredoxin] + S-adenosyl-L-homocysteine. It catalyses the reaction adenosine(37) in tRNA + 2 reduced [2Fe-2S]-[ferredoxin] + 2 S-adenosyl-L-methionine = 2-methyladenosine(37) in tRNA + 5'-deoxyadenosine + L-methionine + 2 oxidized [2Fe-2S]-[ferredoxin] + S-adenosyl-L-homocysteine. Specifically methylates position 2 of adenine 2503 in 23S rRNA and position 2 of adenine 37 in tRNAs. In Clostridium botulinum (strain Eklund 17B / Type B), this protein is Probable dual-specificity RNA methyltransferase RlmN.